Reading from the N-terminus, the 327-residue chain is Phenylalanine--tRNA ligase alpha subunit (327 aa).

Glu252 is a Mg(2+) binding site.

It belongs to the class-II aminoacyl-tRNA synthetase family. Phe-tRNA synthetase alpha subunit type 1 subfamily. Tetramer of two alpha and two beta subunits. It depends on Mg(2+) as a cofactor.

It is found in the cytoplasm. The catalysed reaction is tRNA(Phe) + L-phenylalanine + ATP = L-phenylalanyl-tRNA(Phe) + AMP + diphosphate + H(+). The protein is Phenylalanine--tRNA ligase alpha subunit of Sodalis glossinidius (strain morsitans).